Reading from the N-terminus, the 77-residue chain is MRIEIMIDKEQKISQSTLDALESELYRNLRPLYPKTVIRIRKGSSNGVELTGLQLDEERKQVMKIMQKVWEDDSWLH.

The protein belongs to the DinI family.

This Escherichia coli protein is DinI-like protein in retron Ec67.